Consider the following 464-residue polypeptide: Lysosomal proton-coupled steroid conjugate and bile acid symporter SLC46A3 (464 aa).

The N-terminal stretch at 1 to 26 (MRKVLLVEPVIFIYIFASSLTSPVVQ) is a signal peptide. Over 27–71 (QFIYRKLWEEEYNSTAISSDNSSHCERNKSSPTYVMEKAIQEKTS) the chain is Extracellular. N-linked (GlcNAc...) asparagine glycans are attached at residues Asn39, Asn47, and Asn54. A helical transmembrane segment spans residues 72 to 92 (FFNMQLDLTGAVPSLIVAFII). Residues 93–104 (VANGDHQGRKKS) are Cytoplasmic-facing. The chain crosses the membrane as a helical span at residues 105–125 (LVLPSIGALIADIFLTIVSYF). Residues 126–130 (SWPTS) lie on the Extracellular side of the membrane. The chain crosses the membrane as a helical span at residues 131–151 (VLFLATFISGLFGSMATFLGG). Topologically, residues 152–171 (GFAYIADQCHDEKQKTTRIA) are cytoplasmic. A helical transmembrane segment spans residues 172-192 (VIDLIFGVVSGLAGLSSGYFL). Residues 193–198 (REMGFT) are Extracellular-facing. The chain crosses the membrane as a helical span at residues 199 to 219 (WTFATASLLHVVNIIYITFFL). Over 220–259 (QDTVHISEFQQQAPLSYKEHLKETFSGVYMLFKTAPSKKR) the chain is Cytoplasmic. Residues 260–280 (ILIIVLLFIFMTYLFTMFGGS) form a helical membrane-spanning segment. The Extracellular portion of the chain corresponds to 281–296 (SLFTLYELDEPLCWTE). A helical transmembrane segment spans residues 297–317 (VYIGYGAAAFTSISLTSFLGV). The Cytoplasmic portion of the chain corresponds to 318 to 326 (YLFSKCLKD). The chain crosses the membrane as a helical span at residues 327–347 (IYIVFIGIFSYIGGIVMAAFA). Over 348-349 (KT) the chain is Extracellular. Residues 350-370 (TLLMFLVRVPSLFSIMPIPVL) traverse the membrane as a helical segment. Residues 371-384 (RSMLSKVVLPSEQG) lie on the Cytoplasmic side of the membrane. The chain crosses the membrane as a helical span at residues 385-405 (AVFACIACLEVLTGTISLSVF). Over 406–418 (NVIYAATVAWFSG) the chain is Extracellular. Residues 419 to 439 (FSFLLSASLCLIPLGVLCWLL) traverse the membrane as a helical segment. Residues 440 to 464 (CTSWNGEDLALLVPEEVSSIDSVDS) are Cytoplasmic-facing.

It belongs to the major facilitator superfamily. SLC46A family.

Its subcellular location is the lysosome membrane. The enzyme catalyses estrone 3-sulfate(out) + n H(+)(out) = estrone 3-sulfate(in) + n H(+)(in). It carries out the reaction 25-hydroxyvitamin D3 sulfate(out) + n H(+)(out) = 25-hydroxyvitamin D3 sulfate(in) + n H(+)(in). The catalysed reaction is cholate(out) + n H(+)(out) = cholate(in) + n H(+)(in). It catalyses the reaction glycocholate(out) + n H(+)(out) = glycocholate(in) + n H(+)(in). The enzyme catalyses taurocholate(out) + n H(+)(out) = taurocholate(in) + n H(+)(in). It carries out the reaction dehydroepiandrosterone 3-sulfate(out) + n H(+)(out) = dehydroepiandrosterone 3-sulfate(in) + n H(+)(in). Lysosomal proton-coupled steroid conjugate and bile acid transporter. Preferentially recognizes lipophilic steroid conjugates or bile acis as endogenous substrates and seems to mediate escape from lysosomes to the cytoplasm. Modulates hepatic cytosolic copper homeostasis, maybe acting as a lysosomal copper transporter and sequestering copper ions in the lysosome. In Gallus gallus (Chicken), this protein is Lysosomal proton-coupled steroid conjugate and bile acid symporter SLC46A3 (SLC46A3).